A 374-amino-acid polypeptide reads, in one-letter code: Double homeobox protein 4C (374 aa).

The span at M1 to T10 shows a compositional bias: polar residues. 3 disordered regions span residues M1–L24, S72–T102, and L218–L374. DNA-binding regions (homeobox) lie at residues G19 to H78 and G94 to G153. Residues K265–R274 are compositionally biased toward basic and acidic residues. Low complexity-rich tracts occupy residues P278–P302 and A319–A329. The segment covering Q354–L374 has biased composition (polar residues).

As to quaternary structure, may interact with MYF5; regulates MYF5 expression. As to expression, expressed in muscles, as well as in primary myoblasts and myotubes (at protein level).

The protein resides in the nucleus. It is found in the cytoplasm. Functionally, down-regulates MYOD1 expression and may up-regulate MYF5 expression. May regulate microRNA (miRNA) transcription, up-regulating the expression of some myogenic miRNAs, including MIR1-1, MIR133A2, MIR133B and MIR206. Impairs the differentiation of myoblasts and may be involved in muscle regeneration. Reduces DUX4-induced nuclear localization of CTNNB1/beta-catenin and its subsequent activation of target genes. The polypeptide is Double homeobox protein 4C (DUX4L9) (Homo sapiens (Human)).